Reading from the N-terminus, the 115-residue chain is T cell receptor beta variable 12-5 (115 aa).

A signal peptide spans 1–21; that stretch reads MATRLLCCVVLCLLGEELIDA. The 94-residue stretch at 22 to 115 folds into the Ig-like domain; sequence RVTQTPRHKV…SAVYFCASGL (94 aa). Cys42 and Cys111 are disulfide-bonded.

Alpha-beta TR is a heterodimer composed of an alpha and beta chain; disulfide-linked. The alpha-beta TR is associated with the transmembrane signaling CD3 coreceptor proteins to form the TR-CD3 (TcR or TCR). The assembly of alpha-beta TR heterodimers with CD3 occurs in the endoplasmic reticulum where a single alpha-beta TR heterodimer associates with one CD3D-CD3E heterodimer, one CD3G-CD3E heterodimer and one CD247 homodimer forming a stable octameric structure. CD3D-CD3E and CD3G-CD3E heterodimers preferentially associate with TR alpha and TR beta chains, respectively. The association of the CD247 homodimer is the last step of TcR assembly in the endoplasmic reticulum and is required for transport to the cell surface.

It localises to the cell membrane. Functionally, v region of the variable domain of T cell receptor (TR) beta chain that participates in the antigen recognition. Alpha-beta T cell receptors are antigen specific receptors which are essential to the immune response and are present on the cell surface of T lymphocytes. Recognize peptide-major histocompatibility (MH) (pMH) complexes that are displayed by antigen presenting cells (APC), a prerequisite for efficient T cell adaptive immunity against pathogens. Binding of alpha-beta TR to pMH complex initiates TR-CD3 clustering on the cell surface and intracellular activation of LCK that phosphorylates the ITAM motifs of CD3G, CD3D, CD3E and CD247 enabling the recruitment of ZAP70. In turn ZAP70 phosphorylates LAT, which recruits numerous signaling molecules to form the LAT signalosome. The LAT signalosome propagates signal branching to three major signaling pathways, the calcium, the mitogen-activated protein kinase (MAPK) kinase and the nuclear factor NF-kappa-B (NF-kB) pathways, leading to the mobilization of transcription factors that are critical for gene expression and essential for T cell growth and differentiation. The T cell repertoire is generated in the thymus, by V-(D)-J rearrangement. This repertoire is then shaped by intrathymic selection events to generate a peripheral T cell pool of self-MH restricted, non-autoaggressive T cells. Post-thymic interaction of alpha-beta TR with the pMH complexes shapes TR structural and functional avidity. This Homo sapiens (Human) protein is T cell receptor beta variable 12-5.